We begin with the raw amino-acid sequence, 294 residues long: uncharacterized protein (294 aa).

The 139-residue stretch at 13–151 folds into the Tyrosine-protein phosphatase domain; that stretch reads QCSQIRPYLY…LIDLEQKLRG (139 aa). C95 acts as the Phosphocysteine intermediate in catalysis. Positions 234–294 are disordered; sequence PTLLVPSSSS…WRLSFHKDVV (61 aa).

It belongs to the protein-tyrosine phosphatase family. Non-receptor class dual specificity subfamily.

This is an uncharacterized protein from Caenorhabditis elegans.